The following is a 304-amino-acid chain: Bifunctional phosphoglucose/phosphomannose isomerase (304 aa).

The region spanning 16-147 (FDKSFKVGKY…KPKIGDVDEA (132 aa)) is the SIS domain. Residues Gly-35, Ser-36, Ser-74, Ser-76, Thr-79, and Arg-122 each contribute to the D-fructose 6-phosphate site. Glu-196 functions as the Proton acceptor in the catalytic mechanism. Residues His-212 and Lys-300 each coordinate D-fructose 6-phosphate. Catalysis depends on His-212, which acts as the Proton donor. The Proton acceptor role is filled by Lys-300.

It belongs to the PGI/PMI family. In terms of assembly, homodimer.

The enzyme catalyses alpha-D-glucose 6-phosphate = beta-D-fructose 6-phosphate. It carries out the reaction D-mannose 6-phosphate = D-fructose 6-phosphate. In terms of biological role, dual specificity isomerase that catalyzes the isomerization of both glucose-6-phosphate and mannose-6-phosphate to fructose-6-phosphate. This is Bifunctional phosphoglucose/phosphomannose isomerase from Thermoplasma volcanium (strain ATCC 51530 / DSM 4299 / JCM 9571 / NBRC 15438 / GSS1).